Here is a 595-residue protein sequence, read N- to C-terminus: Aspartate--tRNA ligase (595 aa).

Glu176 contacts L-aspartate. The aspartate stretch occupies residues 200 to 203; the sequence is QIFK. Arg222 contacts L-aspartate. ATP contacts are provided by residues 222 to 224 and Gln231; that span reads RDE. Position 450 (His450) interacts with L-aspartate. Glu484 provides a ligand contact to ATP. An L-aspartate-binding site is contributed by Arg491. An ATP-binding site is contributed by 536 to 539; the sequence is GLDR.

This sequence belongs to the class-II aminoacyl-tRNA synthetase family. Type 1 subfamily. In terms of assembly, homodimer.

Its subcellular location is the cytoplasm. It catalyses the reaction tRNA(Asp) + L-aspartate + ATP = L-aspartyl-tRNA(Asp) + AMP + diphosphate. In terms of biological role, catalyzes the attachment of L-aspartate to tRNA(Asp) in a two-step reaction: L-aspartate is first activated by ATP to form Asp-AMP and then transferred to the acceptor end of tRNA(Asp). The chain is Aspartate--tRNA ligase from Halalkalibacterium halodurans (strain ATCC BAA-125 / DSM 18197 / FERM 7344 / JCM 9153 / C-125) (Bacillus halodurans).